The chain runs to 415 residues: Protein ROH1A (415 aa).

Residues 184–219 (VSGGGGGGGGGNKTTERSWSFGRRSGGSSAASKGGA) are disordered. A compositionally biased stretch (gly residues) spans 185–195 (SGGGGGGGGGN). Residues 200–219 (RSWSFGRRSGGSSAASKGGA) show a composition bias toward low complexity. Residues 263-283 (MFIMSTVMVFVMWVLTAAVPC) traverse the membrane as a helical segment.

Belongs to the ROH1 family. In terms of assembly, interacts with EXO70A1 and EXO70C1. Binds to EXO70C2. As to expression, mainly expressed in cells expanding in a polar manner such as pollen and root hairs.

Its subcellular location is the membrane. It localises to the cytoplasm. The protein resides in the cytosol. In terms of biological role, required for seed coat mucilage deposition. The sequence is that of Protein ROH1A from Arabidopsis thaliana (Mouse-ear cress).